We begin with the raw amino-acid sequence, 89 residues long: Elongation factor 1-beta (89 aa).

Belongs to the EF-1-beta/EF-1-delta family.

Functionally, promotes the exchange of GDP for GTP in EF-1-alpha/GDP, thus allowing the regeneration of EF-1-alpha/GTP that could then be used to form the ternary complex EF-1-alpha/GTP/AAtRNA. The protein is Elongation factor 1-beta (ef1b) of Methanocaldococcus jannaschii (strain ATCC 43067 / DSM 2661 / JAL-1 / JCM 10045 / NBRC 100440) (Methanococcus jannaschii).